A 177-amino-acid chain; its full sequence is Large ribosomal subunit protein uL6 (177 aa).

The tract at residues 157–177 (YKGKGVRYAGEKVRRKEGKKK) is disordered.

Belongs to the universal ribosomal protein uL6 family. Part of the 50S ribosomal subunit.

Functionally, this protein binds to the 23S rRNA, and is important in its secondary structure. It is located near the subunit interface in the base of the L7/L12 stalk, and near the tRNA binding site of the peptidyltransferase center. This Caulobacter vibrioides (strain ATCC 19089 / CIP 103742 / CB 15) (Caulobacter crescentus) protein is Large ribosomal subunit protein uL6.